The chain runs to 656 residues: Nexilin (656 aa).

Disordered regions lie at residues 1 to 131 (MNDV…IEQD), 165 to 198 (RAAA…EEEC), and 215 to 284 (TEAK…VFKE). The segment covering 11 to 26 (LLSSSKPVPKSYVPKL) has biased composition (low complexity). Over residues 27-78 (GKGDVKDKFEAMQRAREERNQRRSRDEKQRRKEQYIREREWNRRKQEIKDML) the composition is skewed to basic and acidic residues. At Ser-80 the chain carries Phosphoserine. Basic and acidic residues-rich tracts occupy residues 103–131 (GKFD…IEQD), 169–198 (NRKD…EEEC), and 216–269 (EAKK…RNMV). Residues Ser-221, Ser-330, Ser-337, and Ser-345 each carry the phosphoserine modification. The residue at position 350 (Thr-350) is a Phosphothreonine. Disordered regions lie at residues 468-492 (NFHE…HKVN) and 529-564 (AALQ…APWF). A phosphoserine mark is found at Ser-544 and Ser-549. Thr-551 is modified (phosphothreonine). The region spanning 562 to 650 (PWFKKPLRNT…GSAASTCILT (89 aa)) is the Ig-like domain.

As to quaternary structure, interacts with F-actin. Expressed in brain, testis, spleen and fibroblasts (at protein level). Not detected in liver, kidney or epithelial cells (at protein level).

It is found in the cytoplasm. It localises to the cytoskeleton. Its subcellular location is the cell junction. The protein resides in the adherens junction. The protein localises to the myofibril. It is found in the sarcomere. It localises to the z line. In terms of biological role, involved in regulating cell migration through association with the actin cytoskeleton. Has an essential role in the maintenance of Z line and sarcomere integrity. This Rattus norvegicus (Rat) protein is Nexilin.